We begin with the raw amino-acid sequence, 130 residues long: Small ribosomal subunit protein uS9 (130 aa).

Positions 101–130 (AGLLTRDARMKERKKPGLKKARKASQFSKR) are disordered. Basic residues predominate over residues 111–130 (KERKKPGLKKARKASQFSKR).

The protein belongs to the universal ribosomal protein uS9 family.

This Levilactobacillus brevis (strain ATCC 367 / BCRC 12310 / CIP 105137 / JCM 1170 / LMG 11437 / NCIMB 947 / NCTC 947) (Lactobacillus brevis) protein is Small ribosomal subunit protein uS9.